A 394-amino-acid polypeptide reads, in one-letter code: Elongation factor Tu (394 aa).

A tr-type G domain is found at 10–204 (KPHVNIGTIG…AVDSYIPQPV (195 aa)). The interval 19–26 (GHVDHGKT) is G1. 19-26 (GHVDHGKT) serves as a coordination point for GTP. T26 provides a ligand contact to Mg(2+). The segment at 60 to 64 (GITIS) is G2. The interval 81–84 (DCPG) is G3. GTP-binding positions include 81–85 (DCPGH) and 136–139 (NKID). Residues 136–139 (NKID) form a G4 region. Residues 174–176 (SAL) form a G5 region.

The protein belongs to the TRAFAC class translation factor GTPase superfamily. Classic translation factor GTPase family. EF-Tu/EF-1A subfamily. In terms of assembly, monomer.

The protein localises to the cytoplasm. The catalysed reaction is GTP + H2O = GDP + phosphate + H(+). Its function is as follows. GTP hydrolase that promotes the GTP-dependent binding of aminoacyl-tRNA to the A-site of ribosomes during protein biosynthesis. The protein is Elongation factor Tu of Rickettsia rickettsii.